A 93-amino-acid chain; its full sequence is HIG1 domain family member 1A, mitochondrial (93 aa).

The region spanning 1–93 (MSTDTGVSLP…YREFWAKPKP (93 aa)) is the HIG1 domain. Serine 2 is subject to N-acetylserine. Residue serine 8 is modified to Phosphoserine. The next 2 membrane-spanning stretches (helical) occupy residues 26–46 (EAPFVPVGIAGFAAIVAYGLY) and 60–80 (LIHMRVAAQGFVVGAMTVGMG).

As to quaternary structure, associates with cytochrome c oxidase (COX, complex IV); proposed complex component. Also associates with respiratory chain supercomplexes.

The protein resides in the mitochondrion membrane. It is found in the mitochondrion inner membrane. Functionally, proposed subunit of cytochrome c oxidase (COX, complex IV), which is the terminal component of the mitochondrial respiratory chain that catalyzes the reduction of oxygen to water. May play a role in the assembly of respiratory supercomplexes. The protein is HIG1 domain family member 1A, mitochondrial (HIGD1A) of Homo sapiens (Human).